Reading from the N-terminus, the 79-residue chain is MDTKQAVLDILNELTGEDLSDQMDENIFENGLLDSMATVQMLLELQDKCDVTAPVSEFHREDWDTPNKIIAKVESLRNE.

A Carrier domain is found at M1 to R77. S35 carries the O-(pantetheine 4'-phosphoryl)serine modification.

Belongs to the DltC family. Post-translationally, 4'-phosphopantetheine is transferred from CoA to a specific serine of apo-DCP.

The protein localises to the cytoplasm. The protein operates within cell wall biogenesis; lipoteichoic acid biosynthesis. Its function is as follows. Carrier protein involved in the D-alanylation of lipoteichoic acid (LTA). The loading of thioester-linked D-alanine onto DltC is catalyzed by D-alanine--D-alanyl carrier protein ligase DltA. The DltC-carried D-alanyl group is further transferred to cell membrane phosphatidylglycerol (PG) by forming an ester bond, probably catalyzed by DltD. D-alanylation of LTA plays an important role in modulating the properties of the cell wall in Gram-positive bacteria, influencing the net charge of the cell wall. This is D-alanyl carrier protein from Lactobacillus johnsonii (strain CNCM I-12250 / La1 / NCC 533).